Reading from the N-terminus, the 356-residue chain is S-adenosylmethionine:tRNA ribosyltransferase-isomerase (356 aa).

The protein belongs to the QueA family. As to quaternary structure, monomer.

It localises to the cytoplasm. The enzyme catalyses 7-aminomethyl-7-carbaguanosine(34) in tRNA + S-adenosyl-L-methionine = epoxyqueuosine(34) in tRNA + adenine + L-methionine + 2 H(+). The protein operates within tRNA modification; tRNA-queuosine biosynthesis. Functionally, transfers and isomerizes the ribose moiety from AdoMet to the 7-aminomethyl group of 7-deazaguanine (preQ1-tRNA) to give epoxyqueuosine (oQ-tRNA). The polypeptide is S-adenosylmethionine:tRNA ribosyltransferase-isomerase (Escherichia coli (strain 55989 / EAEC)).